Reading from the N-terminus, the 508-residue chain is Flavonoid 3',5'-hydroxylase 2 (508 aa).

Residue Cys-443 participates in heme binding.

Belongs to the cytochrome P450 family. Requires heme as cofactor. Flowers.

The protein localises to the microsome. The protein resides in the endoplasmic reticulum. It catalyses the reaction a 3',5'-unsubstituted flavanone + 2 reduced [NADPH--hemoprotein reductase] + 2 O2 = a 3',5'-dihydroxyflavanone + 2 oxidized [NADPH--hemoprotein reductase] + 2 H2O + 2 H(+). The protein operates within pigment biosynthesis; anthocyanin biosynthesis. Catalyzes the 3'5'-hydroxylation of naringenin and eriodictyol to form 5,7,3,'4',5'-pentahydroxyflavanone and 3',5'-hydroxylation of dihydrokaempferol and dihydroquercetin to form dihydromyricetin. The chain is Flavonoid 3',5'-hydroxylase 2 (CYP75A3) from Petunia hybrida (Petunia).